The primary structure comprises 150 residues: UPF0178 protein ECA0873 (150 aa).

This sequence belongs to the UPF0178 family.

In Pectobacterium atrosepticum (strain SCRI 1043 / ATCC BAA-672) (Erwinia carotovora subsp. atroseptica), this protein is UPF0178 protein ECA0873.